We begin with the raw amino-acid sequence, 238 residues long: Valine-rich protein (238 aa).

The first 16 residues, 1-16 (MQAVLLVVALFGAALA), serve as a signal peptide directing secretion.

As to expression, prismatic layer of shell (at protein level). Expressed primarily in the mantle with highest level in the mantle edge and lower level in the mantle pallium.

The protein resides in the secreted. The chain is Valine-rich protein from Pinctada maxima (Silver-lipped pearl oyster).